A 207-amino-acid polypeptide reads, in one-letter code: Large ribosomal subunit protein uL4 (207 aa).

The protein belongs to the universal ribosomal protein uL4 family. As to quaternary structure, part of the 50S ribosomal subunit.

Functionally, one of the primary rRNA binding proteins, this protein initially binds near the 5'-end of the 23S rRNA. It is important during the early stages of 50S assembly. It makes multiple contacts with different domains of the 23S rRNA in the assembled 50S subunit and ribosome. In terms of biological role, forms part of the polypeptide exit tunnel. The chain is Large ribosomal subunit protein uL4 from Geobacter sulfurreducens (strain ATCC 51573 / DSM 12127 / PCA).